Consider the following 247-residue polypeptide: 3-deoxy-manno-octulosonate cytidylyltransferase (247 aa).

Belongs to the KdsB family.

It is found in the cytoplasm. It carries out the reaction 3-deoxy-alpha-D-manno-oct-2-ulosonate + CTP = CMP-3-deoxy-beta-D-manno-octulosonate + diphosphate. It functions in the pathway nucleotide-sugar biosynthesis; CMP-3-deoxy-D-manno-octulosonate biosynthesis; CMP-3-deoxy-D-manno-octulosonate from 3-deoxy-D-manno-octulosonate and CTP: step 1/1. The protein operates within bacterial outer membrane biogenesis; lipopolysaccharide biosynthesis. In terms of biological role, activates KDO (a required 8-carbon sugar) for incorporation into bacterial lipopolysaccharide in Gram-negative bacteria. In Chlorobium phaeobacteroides (strain DSM 266 / SMG 266 / 2430), this protein is 3-deoxy-manno-octulosonate cytidylyltransferase.